The following is a 262-amino-acid chain: Indole-3-glycerol phosphate synthase (262 aa).

It belongs to the TrpC family.

The catalysed reaction is 1-(2-carboxyphenylamino)-1-deoxy-D-ribulose 5-phosphate + H(+) = (1S,2R)-1-C-(indol-3-yl)glycerol 3-phosphate + CO2 + H2O. It participates in amino-acid biosynthesis; L-tryptophan biosynthesis; L-tryptophan from chorismate: step 4/5. The polypeptide is Indole-3-glycerol phosphate synthase (Bordetella pertussis (strain Tohama I / ATCC BAA-589 / NCTC 13251)).